We begin with the raw amino-acid sequence, 126 residues long: Aspartate 1-decarboxylase (126 aa).

S25 (schiff-base intermediate with substrate; via pyruvic acid) is an active-site residue. S25 is subject to Pyruvic acid (Ser). Position 57 (T57) interacts with substrate. The Proton donor role is filled by Y58. 73–75 contributes to the substrate binding site; that stretch reads GAA.

Belongs to the PanD family. In terms of assembly, heterooctamer of four alpha and four beta subunits. Pyruvate serves as cofactor. Is synthesized initially as an inactive proenzyme, which is activated by self-cleavage at a specific serine bond to produce a beta-subunit with a hydroxyl group at its C-terminus and an alpha-subunit with a pyruvoyl group at its N-terminus.

It localises to the cytoplasm. The enzyme catalyses L-aspartate + H(+) = beta-alanine + CO2. It participates in cofactor biosynthesis; (R)-pantothenate biosynthesis; beta-alanine from L-aspartate: step 1/1. Functionally, catalyzes the pyruvoyl-dependent decarboxylation of aspartate to produce beta-alanine. This chain is Aspartate 1-decarboxylase, found in Pseudomonas aeruginosa (strain LESB58).